A 422-amino-acid chain; its full sequence is Probable alpha-1,6-mannosyltransferase MNN11 (422 aa).

Residues 1–31 (MAIKPRTKGKTYSSRSVGSQWFNRLGFKQNK) are Cytoplasmic-facing. Residues 32–52 (YGTCKFLSIITAFVFILYFFS) traverse the membrane as a helical; Signal-anchor for type II membrane protein segment. Topologically, residues 53–422 (NRFYPISRSA…GHMYQKIKKS (370 aa)) are lumenal.

The protein belongs to the glycosyltransferase 34 family. In terms of assembly, component of the M-Pol II complex composed of ANP1, MNN9, MNN10, MNN11 and HOC1.

The protein localises to the golgi apparatus. It localises to the cis-Golgi network membrane. Functionally, required for synthesis of full-length mannan chains. Its function is as follows. The M-Pol II complex possesses alpha-1,6-mannosyltransferase activity and is probably involved in the elongation of the mannan backbone of N-linked glycans on cell wall and periplasmic proteins. The sequence is that of Probable alpha-1,6-mannosyltransferase MNN11 (MNN11) from Saccharomyces cerevisiae (strain ATCC 204508 / S288c) (Baker's yeast).